Reading from the N-terminus, the 323-residue chain is tRNA U34 carboxymethyltransferase (323 aa).

Residues K91, W105, K110, G130, D152–T154, I181–E182, M196, Y200, and R315 contribute to the carboxy-S-adenosyl-L-methionine site.

It belongs to the class I-like SAM-binding methyltransferase superfamily. CmoB family. As to quaternary structure, homotetramer.

It carries out the reaction carboxy-S-adenosyl-L-methionine + 5-hydroxyuridine(34) in tRNA = 5-carboxymethoxyuridine(34) in tRNA + S-adenosyl-L-homocysteine + H(+). Its function is as follows. Catalyzes carboxymethyl transfer from carboxy-S-adenosyl-L-methionine (Cx-SAM) to 5-hydroxyuridine (ho5U) to form 5-carboxymethoxyuridine (cmo5U) at position 34 in tRNAs. This Salmonella arizonae (strain ATCC BAA-731 / CDC346-86 / RSK2980) protein is tRNA U34 carboxymethyltransferase.